A 143-amino-acid polypeptide reads, in one-letter code: Potassium voltage-gated channel subfamily E regulatory beta subunit 5 (143 aa).

N-linked (GlcNAc...) asparagine glycans are attached at residues asparagine 2 and asparagine 25. A helical membrane pass occupies residues 61–81 (LYILLIMIFYACLAGGLILAY). Topologically, residues 82-143 (TRSRKLVEAK…PALAQGAERV (62 aa)) are cytoplasmic.

Belongs to the potassium channel KCNE family. In terms of assembly, interacts with KCNQ1; impairs KCNQ1 localization in lipid rafts and only conducts current upon strong and continued depolarization. Detected in embryonal dorsal root and nerve ganglia, in the somites and in myoepicardial layer of the developing heart wall. Detected at lower levels in the central nervous system (CNS) and in developing limb.

Its subcellular location is the membrane. In terms of biological role, potassium channel ancillary subunit that is essential for generation of some native K(+) currents by virtue of formation of heteromeric ion channel complex with voltage-gated potassium (Kv) channel pore-forming alpha subunits. Functions as an inhibitory beta-subunit of the repolarizing cardiac potassium ion channel KCNQ1. This chain is Potassium voltage-gated channel subfamily E regulatory beta subunit 5 (Kcne5), found in Mus musculus (Mouse).